The following is a 485-amino-acid chain: Probable glycine dehydrogenase (decarboxylating) subunit 2 (485 aa).

Lys269 bears the N6-(pyridoxal phosphate)lysine mark.

This sequence belongs to the GcvP family. C-terminal subunit subfamily. As to quaternary structure, the glycine cleavage system is composed of four proteins: P, T, L and H. In this organism, the P 'protein' is a heterodimer of two subunits. Requires pyridoxal 5'-phosphate as cofactor.

It carries out the reaction N(6)-[(R)-lipoyl]-L-lysyl-[glycine-cleavage complex H protein] + glycine + H(+) = N(6)-[(R)-S(8)-aminomethyldihydrolipoyl]-L-lysyl-[glycine-cleavage complex H protein] + CO2. The glycine cleavage system catalyzes the degradation of glycine. The P protein binds the alpha-amino group of glycine through its pyridoxal phosphate cofactor; CO(2) is released and the remaining methylamine moiety is then transferred to the lipoamide cofactor of the H protein. The chain is Probable glycine dehydrogenase (decarboxylating) subunit 2 from Chlorobium phaeovibrioides (strain DSM 265 / 1930) (Prosthecochloris vibrioformis (strain DSM 265)).